Consider the following 142-residue polypeptide: Large ribosomal subunit protein uL13 (142 aa).

It belongs to the universal ribosomal protein uL13 family. As to quaternary structure, part of the 50S ribosomal subunit.

This protein is one of the early assembly proteins of the 50S ribosomal subunit, although it is not seen to bind rRNA by itself. It is important during the early stages of 50S assembly. The polypeptide is Large ribosomal subunit protein uL13 (Psychrobacter arcticus (strain DSM 17307 / VKM B-2377 / 273-4)).